The sequence spans 657 residues: Katanin p80 WD40 repeat-containing subunit B1 (657 aa).

6 WD repeats span residues 18–58 (AHSS…CVMS), 61–100 (GHTT…ILRT), 103–142 (GHKA…CIFK), 145–184 (SHTQ…VMFE), 187–226 (GHSG…VVSC), and 229–269 (EEAT…DVVV). 2 disordered regions span residues 318–410 (NNEL…EDEP) and 423–454 (VEVQ…RAEP). Residues 325 to 345 (PTPTGSSLRRSYDRPSTSCSK) are compositionally biased toward polar residues. Residues 351-385 (HSSESERRSPSSEEDRDEKESKAEIQNPEDYKEIF) show a composition bias toward basic and acidic residues.

It belongs to the WD repeat KATNB1 family. In terms of assembly, interacts with KATNA1. This interaction enhances the microtubule binding and severing activity of KATNA1 and also targets this activity to the centrosome.

The protein resides in the cytoplasm. It localises to the cytoskeleton. Its subcellular location is the microtubule organizing center. It is found in the centrosome. The protein localises to the spindle pole. The protein resides in the spindle. Its function is as follows. Participates in a complex which severs microtubules in an ATP-dependent manner. May act to target the enzymatic subunit of this complex to sites of action such as the centrosome. Microtubule severing may promote rapid reorganization of cellular microtubule arrays and the release of microtubules from the centrosome following nucleation. The polypeptide is Katanin p80 WD40 repeat-containing subunit B1 (Gallus gallus (Chicken)).